We begin with the raw amino-acid sequence, 223 residues long: Ribose-5-phosphate isomerase A (223 aa).

Substrate-binding positions include 29–32 (TGST), 82–85 (DGAD), and 95–98 (KGGG). Glu-104 (proton acceptor) is an active-site residue. Position 122 (Lys-122) interacts with substrate.

The protein belongs to the ribose 5-phosphate isomerase family. Homodimer.

It carries out the reaction aldehydo-D-ribose 5-phosphate = D-ribulose 5-phosphate. Its pathway is carbohydrate degradation; pentose phosphate pathway; D-ribose 5-phosphate from D-ribulose 5-phosphate (non-oxidative stage): step 1/1. Catalyzes the reversible conversion of ribose-5-phosphate to ribulose 5-phosphate. This is Ribose-5-phosphate isomerase A from Neisseria gonorrhoeae (strain ATCC 700825 / FA 1090).